We begin with the raw amino-acid sequence, 280 residues long: Phosphatidylserine decarboxylase proenzyme (280 aa).

Residues Asp88, His145, and Ser248 each act as charge relay system; for autoendoproteolytic cleavage activity in the active site. The active-site Schiff-base intermediate with substrate; via pyruvic acid; for decarboxylase activity is Ser248. Ser248 bears the Pyruvic acid (Ser); by autocatalysis mark.

The protein belongs to the phosphatidylserine decarboxylase family. PSD-B subfamily. Prokaryotic type I sub-subfamily. In terms of assembly, heterodimer of a large membrane-associated beta subunit and a small pyruvoyl-containing alpha subunit. The cofactor is pyruvate. Post-translationally, is synthesized initially as an inactive proenzyme. Formation of the active enzyme involves a self-maturation process in which the active site pyruvoyl group is generated from an internal serine residue via an autocatalytic post-translational modification. Two non-identical subunits are generated from the proenzyme in this reaction, and the pyruvate is formed at the N-terminus of the alpha chain, which is derived from the carboxyl end of the proenzyme. The autoendoproteolytic cleavage occurs by a canonical serine protease mechanism, in which the side chain hydroxyl group of the serine supplies its oxygen atom to form the C-terminus of the beta chain, while the remainder of the serine residue undergoes an oxidative deamination to produce ammonia and the pyruvoyl prosthetic group on the alpha chain. During this reaction, the Ser that is part of the protease active site of the proenzyme becomes the pyruvoyl prosthetic group, which constitutes an essential element of the active site of the mature decarboxylase.

The protein resides in the cell membrane. The enzyme catalyses a 1,2-diacyl-sn-glycero-3-phospho-L-serine + H(+) = a 1,2-diacyl-sn-glycero-3-phosphoethanolamine + CO2. Its pathway is phospholipid metabolism; phosphatidylethanolamine biosynthesis; phosphatidylethanolamine from CDP-diacylglycerol: step 2/2. Its function is as follows. Catalyzes the formation of phosphatidylethanolamine (PtdEtn) from phosphatidylserine (PtdSer). In Methylobacillus flagellatus (strain ATCC 51484 / DSM 6875 / VKM B-1610 / KT), this protein is Phosphatidylserine decarboxylase proenzyme.